A 148-amino-acid chain; its full sequence is Lysozyme C (148 aa).

Residues 1–18 (MKVLIILGLVLLSVMVQG) form the signal peptide. The 130-residue stretch at 19–148 (KVFERCELAR…VSQYVQGCGV (130 aa)) folds into the C-type lysozyme domain. Disulfide bonds link C24–C146, C48–C134, C83–C99, and C95–C113. Catalysis depends on residues E53 and D71.

Belongs to the glycosyl hydrolase 22 family. In terms of assembly, monomer.

It catalyses the reaction Hydrolysis of (1-&gt;4)-beta-linkages between N-acetylmuramic acid and N-acetyl-D-glucosamine residues in a peptidoglycan and between N-acetyl-D-glucosamine residues in chitodextrins.. In terms of biological role, lysozymes have primarily a bacteriolytic function; those in tissues and body fluids are associated with the monocyte-macrophage system and enhance the activity of immunoagents. This is Lysozyme C (LYZ) from Callithrix jacchus (White-tufted-ear marmoset).